The following is a 335-amino-acid chain: Phosphate acyltransferase (335 aa).

It belongs to the PlsX family. Homodimer. Probably interacts with PlsY.

The protein localises to the cytoplasm. It catalyses the reaction a fatty acyl-[ACP] + phosphate = an acyl phosphate + holo-[ACP]. It participates in lipid metabolism; phospholipid metabolism. Its function is as follows. Catalyzes the reversible formation of acyl-phosphate (acyl-PO(4)) from acyl-[acyl-carrier-protein] (acyl-ACP). This enzyme utilizes acyl-ACP as fatty acyl donor, but not acyl-CoA. In Streptococcus pyogenes serotype M6 (strain ATCC BAA-946 / MGAS10394), this protein is Phosphate acyltransferase.